We begin with the raw amino-acid sequence, 115 residues long: NADH-ubiquinone oxidoreductase chain 3 (115 aa).

A run of 3 helical transmembrane segments spans residues 3–23, 55–75, and 84–104; these read VMLA…IAFW, FFLV…LLPL, and LPTM…SLAY.

Belongs to the complex I subunit 3 family. As to quaternary structure, core subunit of respiratory chain NADH dehydrogenase (Complex I) which is composed of 45 different subunits. Interacts with TMEM186. Interacts with TMEM242.

The protein resides in the mitochondrion inner membrane. It catalyses the reaction a ubiquinone + NADH + 5 H(+)(in) = a ubiquinol + NAD(+) + 4 H(+)(out). Core subunit of the mitochondrial membrane respiratory chain NADH dehydrogenase (Complex I) which catalyzes electron transfer from NADH through the respiratory chain, using ubiquinone as an electron acceptor. Essential for the catalytic activity of complex I. The protein is NADH-ubiquinone oxidoreductase chain 3 of Felis catus (Cat).